The following is a 110-amino-acid chain: MALWMRLLPLLAFLILWEPSPAHAFVNQHLCGSHLVEALYLVCGERGFFYTPKFRRGVDDPQMPQLELGGSPGAGDLRALALEVARQKRGIVEQCCTGICSLYQLENYCN.

The first 24 residues, 1-24 (MALWMRLLPLLAFLILWEPSPAHA), serve as a signal peptide directing secretion. 3 cysteine pairs are disulfide-bonded: Cys31–Cys96, Cys43–Cys109, and Cys95–Cys100. The propeptide at 57–87 (GVDDPQMPQLELGGSPGAGDLRALALEVARQ) is c peptide.

Belongs to the insulin family. In terms of assembly, heterodimer of a B chain and an A chain linked by two disulfide bonds.

The protein localises to the secreted. Insulin decreases blood glucose concentration. It increases cell permeability to monosaccharides, amino acids and fatty acids. It accelerates glycolysis, the pentose phosphate cycle, and glycogen synthesis in liver. This chain is Insulin (INS), found in Psammomys obesus (Fat sand rat).